The primary structure comprises 323 residues: Viral cathepsin (323 aa).

An N-terminal signal peptide occupies residues M1–A18. Residues Y19–G112 constitute a propeptide, activation peptide. 3 cysteine pairs are disulfide-bonded: C133–C174, C167–C207, and C262–C310. C136 is an active-site residue. N158 carries N-linked (GlcNAc...) asparagine; by host glycosylation. Residues H269 and N289 contribute to the active site.

It belongs to the peptidase C1 family. Post-translationally, synthesized as an inactive proenzyme and activated by proteolytic removal of the inhibitory propeptide.

It carries out the reaction Endopeptidase of broad specificity, hydrolyzing substrates of both cathepsin L and cathepsin B.. Functionally, cysteine protease that plays an essential role in host liquefaction to facilitate horizontal transmission of the virus. May participate in the degradation of foreign protein expressed by the baculovirus system. The protein is Viral cathepsin (VCATH) of Lepidoptera (butterflies and moths).